The chain runs to 193 residues: MSGMTEVSSLTGRLLVATPALADPNFERAVVLLLDHDEEGSLGVVLNRPTPVDVGDILEDWADLAGEPGVVFQGGPVSLDSALGVAVVPGGASGERAPLGWRRVHGAIGLVDLEAPPELLAPAVGALRIFAGYAGWGPGQLEDELTEGAWYVVESEPGDVSSPFPERLWREVLRRQRGDLAMVATYPDDPSLN.

Belongs to the UPF0301 (AlgH) family.

This is UPF0301 protein SCO2948 from Streptomyces coelicolor (strain ATCC BAA-471 / A3(2) / M145).